Consider the following 498-residue polypeptide: Galactose-1-phosphate uridylyltransferase (498 aa).

The protein belongs to the galactose-1-phosphate uridylyltransferase type 2 family.

It is found in the cytoplasm. The catalysed reaction is alpha-D-galactose 1-phosphate + UDP-alpha-D-glucose = alpha-D-glucose 1-phosphate + UDP-alpha-D-galactose. The protein operates within carbohydrate metabolism; galactose metabolism. The protein is Galactose-1-phosphate uridylyltransferase of Staphylococcus carnosus (strain TM300).